A 194-amino-acid chain; its full sequence is Inosine triphosphate pyrophosphatase (194 aa).

10 to 15 (TGNANK) provides a ligand contact to ITP. Position 41 (Glu-41) interacts with Mg(2+). ITP contacts are provided by residues Lys-54, 72 to 73 (DT), Lys-89, 147 to 150 (FGWD), Lys-172, and 177 to 178 (QR).

The protein belongs to the HAM1 NTPase family. In terms of assembly, homodimer. Requires Mg(2+) as cofactor. The cofactor is Mn(2+).

It is found in the cytoplasm. It localises to the nucleus. The catalysed reaction is ITP + H2O = IMP + diphosphate + H(+). It catalyses the reaction dITP + H2O = dIMP + diphosphate + H(+). The enzyme catalyses XTP + H2O = XMP + diphosphate + H(+). Its function is as follows. Pyrophosphatase that hydrolyzes non-canonical purine nucleotides such as inosine triphosphate (ITP), deoxyinosine triphosphate (dITP) or xanthosine 5'-triphosphate (XTP) to their respective monophosphate derivatives. The enzyme does not distinguish between the deoxy- and ribose forms. Probably excludes non-canonical purines from RNA and DNA precursor pools, thus preventing their incorporation into RNA and DNA and avoiding chromosomal lesions. This chain is Inosine triphosphate pyrophosphatase, found in Kluyveromyces lactis (strain ATCC 8585 / CBS 2359 / DSM 70799 / NBRC 1267 / NRRL Y-1140 / WM37) (Yeast).